The following is a 229-amino-acid chain: Endonuclease V (229 aa).

Mg(2+)-binding residues include D46 and D114.

This sequence belongs to the endonuclease V family. Mg(2+) serves as cofactor.

Its subcellular location is the cytoplasm. It catalyses the reaction Endonucleolytic cleavage at apurinic or apyrimidinic sites to products with a 5'-phosphate.. Functionally, DNA repair enzyme involved in the repair of deaminated bases. Selectively cleaves double-stranded DNA at the second phosphodiester bond 3' to a deoxyinosine leaving behind the intact lesion on the nicked DNA. This chain is Endonuclease V, found in Streptomyces avermitilis (strain ATCC 31267 / DSM 46492 / JCM 5070 / NBRC 14893 / NCIMB 12804 / NRRL 8165 / MA-4680).